The primary structure comprises 387 residues: TSC22 domain family protein 4 (387 aa).

Disordered stretches follow at residues 1 to 85 and 135 to 232; these read MSGG…GEPY and ISTP…RRDG. Positions 31–51 are enriched in pro residues; that stretch reads PVPPALAGPPPRLPNGDPNPD. Thr57 is subject to Phosphothreonine. Ser62 and Ser165 each carry phosphoserine. Residue Thr183 is modified to Phosphothreonine. Residues Ser187, Ser189, and Ser219 each carry the phosphoserine modification. Thr223 is subject to Phosphothreonine. 3 positions are modified to phosphoserine: Ser254, Ser258, and Ser271. Residues 336-357 are leucine-zipper; sequence LKEQIRDLAERNAALEQENGLL. Ser362 carries the post-translational modification Phosphoserine. Residues 368–387 form a disordered region; sequence QLPSSGLPRLGPSAPNGPSI.

Belongs to the TSC-22/Dip/Bun family. In terms of assembly, forms a homodimer or heterodimer. Forms a heterodimer with TSC22D1 isoforms 1 and 2. Interacts with NRBP1. As to expression, expressed in the liver (at protein level). Expressed in Purkinje cells and proliferating cerebellar granular neurons (at protein level). Expressed in the cortex, medulla and papilla of the kidney.

The protein localises to the nucleus. It localises to the cytoplasm. Its subcellular location is the cell projection. The protein resides in the dendrite. It is found in the synapse. Binds DNA and acts as a transcriptional repressor. Involved in the regulation of systematic glucose homeostasis and insulin sensitivity, via transcriptional repression of downstream insulin signaling targets such as OBP2A/LCN13. Acts as a negative regulator of lipogenic gene expression in hepatocytes and thereby mediates the control of very low-density lipoprotein release. May play a role in neurite elongation and survival. The chain is TSC22 domain family protein 4 from Mus musculus (Mouse).